Reading from the N-terminus, the 319-residue chain is MLDKHGRKINYLRVSVTDRCNLRCVYCMPPEGIVKKEHDNIMRYEEIFKVVKSASLLGVNKIRFTGGEPLILKDIDKLIYNTSKINSIKDIAMTTNAILLEDMVEELKKDGLKRVNISLDSLKEDRFKSITRGGDINKVFKSIEKSLSIGMKPIKINTVIMKGINDDEIDDFMNLTKKYPISVRFIELMPIGEGRKLYEDSYISSEEIISKHSDLIPVETDKSSTALLYKFKESKENIGFISPMSCKFCSGCNRVRLTSEGTLKPCLHSEKEVDLKNYVDSSQALLSKINETIYNKPLEHHMIEEKESKSKKMMYQIGG.

In terms of domain architecture, Radical SAM core spans 4–219; that stretch reads KHGRKINYLR…SKHSDLIPVE (216 aa). R13 lines the GTP pocket. C20 and C24 together coordinate [4Fe-4S] cluster. Residue Y26 coordinates S-adenosyl-L-methionine. Residue C27 participates in [4Fe-4S] cluster binding. Residue R63 coordinates GTP. Residue G67 participates in S-adenosyl-L-methionine binding. Position 94 (T94) interacts with GTP. S118 contributes to the S-adenosyl-L-methionine binding site. K155 provides a ligand contact to GTP. Residue M189 participates in S-adenosyl-L-methionine binding. [4Fe-4S] cluster-binding residues include C249 and C252. 254–256 lines the GTP pocket; that stretch reads RVR. C266 is a binding site for [4Fe-4S] cluster.

It belongs to the radical SAM superfamily. MoaA family. Monomer and homodimer. Requires [4Fe-4S] cluster as cofactor.

It carries out the reaction GTP + AH2 + S-adenosyl-L-methionine = (8S)-3',8-cyclo-7,8-dihydroguanosine 5'-triphosphate + 5'-deoxyadenosine + L-methionine + A + H(+). Its pathway is cofactor biosynthesis; molybdopterin biosynthesis. Functionally, catalyzes the cyclization of GTP to (8S)-3',8-cyclo-7,8-dihydroguanosine 5'-triphosphate. The protein is GTP 3',8-cyclase of Clostridium botulinum (strain Okra / Type B1).